The chain runs to 364 residues: Aminomethyltransferase (364 aa).

It belongs to the GcvT family. In terms of assembly, the glycine cleavage system is composed of four proteins: P, T, L and H.

The catalysed reaction is N(6)-[(R)-S(8)-aminomethyldihydrolipoyl]-L-lysyl-[protein] + (6S)-5,6,7,8-tetrahydrofolate = N(6)-[(R)-dihydrolipoyl]-L-lysyl-[protein] + (6R)-5,10-methylene-5,6,7,8-tetrahydrofolate + NH4(+). Its function is as follows. The glycine cleavage system catalyzes the degradation of glycine. The protein is Aminomethyltransferase of Shewanella woodyi (strain ATCC 51908 / MS32).